The chain runs to 478 residues: MLO-like protein 13 (478 aa).

The Extracellular segment spans residues 1–10; sequence MAEARSGSLE. Residues 11–31 traverse the membrane as a helical segment; sequence YTPTWVVAFICFIIVLLSLLA. Topologically, residues 32–60 are cytoplasmic; the sequence is ERGLHHLGKCLKRRQQDALFEALQKLKEE. A helical membrane pass occupies residues 61–81; it reads LMLLGFISLMLTVSQAAIRHI. The Extracellular portion of the chain corresponds to 82-145; that stretch reads CVPPALVNNM…VSVEALHQLH (64 aa). Residues 146–166 form a helical membrane-spanning segment; it reads IFIFVLAVFHVIFCASTMVLG. The Cytoplasmic portion of the chain corresponds to 167–276; that stretch reads GARIQQWKHW…LRTLEIDFKK (110 aa). Transmembrane regions (helical) follow at residues 277–297 and 298–318; these read VVSISWYLWLFVVVFLLLNVG and GWNTYFWLSFLPLILLLMVGA. At 319–360 the chain is on the cytoplasmic side; the sequence is KLEYIISSLALDVSEKRSRAEEAVITPSDELFWFHRPGIVLQ. The helical transmembrane segment at 361–381 threads the bilayer; that stretch reads LIHFILFQNSFEIAFFFWILF. The Extracellular segment spans residues 382–400; the sequence is TYGIHSCIMEKLGYLIPRL. A helical membrane pass occupies residues 401–421; it reads VMGVLVQVLCSYSTLPLYALV. At 422-478 the chain is on the cytoplasmic side; it reads TQMGSKFKKGIFDNVVQSTLEGWLEDTRNRGESTSEAHRIEMQPTTPESYNVQSENP. A calmodulin-binding region spans residues 435–456; it reads NVVQSTLEGWLEDTRNRGESTS. Over residues 449 to 462 the composition is skewed to basic and acidic residues; the sequence is RNRGESTSEAHRIE. The segment at 449-478 is disordered; sequence RNRGESTSEAHRIEMQPTTPESYNVQSENP. Positions 464-478 are enriched in polar residues; sequence QPTTPESYNVQSENP.

The protein belongs to the MLO family.

Its subcellular location is the membrane. Its function is as follows. May be involved in modulation of pathogen defense and leaf cell death. Activity seems to be regulated by Ca(2+)-dependent calmodulin binding and seems not to require heterotrimeric G proteins. The chain is MLO-like protein 13 (MLO13) from Arabidopsis thaliana (Mouse-ear cress).